A 370-amino-acid polypeptide reads, in one-letter code: Lysophosphatidic acid receptor 4 (370 aa).

The Extracellular segment spans residues 1-43 (MGDRRFIDFQFQDSNSSLRPRLGNATANNTCIVDDSFKYNLNG). Asn15, Asn24, and Asn28 each carry an N-linked (GlcNAc...) asparagine glycan. A helical transmembrane segment spans residues 44 to 64 (AVYSVVFILGLITNSVSLFVF). The Cytoplasmic segment spans residues 65 to 73 (CFRMKMRSE). Residues 74–94 (TAIFITNLAVSDLLFVCTLPF) traverse the membrane as a helical segment. The Extracellular portion of the chain corresponds to 95-112 (KIFYNFNRHWPFGDTLCK). Cys111 and Cys188 are disulfide-bonded. The chain crosses the membrane as a helical span at residues 113–133 (ISGTAFLTNIYGSMLFLTCIS). Residues 134 to 155 (VDRFLAIVYPFRSRTIRTRRNS) are Cytoplasmic-facing. A helical membrane pass occupies residues 156-176 (AIVCAGVWILVLSGGISASLF). The Extracellular portion of the chain corresponds to 177–203 (STTNVNNATTTCFEGFSKRVWKTYLSK). Asn183 carries an N-linked (GlcNAc...) asparagine glycan. The helical transmembrane segment at 204-224 (ITIFIEVVGFIIPLILNVSCS) threads the bilayer. Over 225–254 (SVVLRTLRKPATLSQIGTNKKKVLKMITVH) the chain is Cytoplasmic. The helical transmembrane segment at 255–275 (MAVFVVCFVPYNSVLFLYALV) threads the bilayer. Residues 276 to 294 (RSQAITNCFLERFAKIMYP) lie on the Extracellular side of the membrane. Residues 295 to 315 (ITLCLATLNCCFDPFIYYFTL) form a helical membrane-spanning segment. The Cytoplasmic segment spans residues 316 to 370 (ESFQKSFYINAHIRMESLFKTETPLTTKPSLPAIQEEVSDQTTNNGGELMLESTF).

It belongs to the G-protein coupled receptor 1 family. As to expression, high expression in ovary. Not detected in the brain regions thalamus, putamen, caudate, frontal cortex, pons, hypothalamus and hippocampus.

Its subcellular location is the cell membrane. Functionally, receptor for lysophosphatidic acid (LPA), a mediator of diverse cellular activities. Transduces a signal by increasing the intracellular calcium ions and by stimulating adenylyl cyclase activity. The rank order of potency for agonists of this receptor is 1-oleoyl- &gt; 1-stearoyl- &gt; 1-palmitoyl- &gt; 1-myristoyl- &gt; 1-alkyl- &gt; 1-alkenyl-LPA. The polypeptide is Lysophosphatidic acid receptor 4 (LPAR4) (Homo sapiens (Human)).